Here is a 332-residue protein sequence, read N- to C-terminus: Succinylglutamate desuccinylase (332 aa).

Residues H59, E62, and H151 each contribute to the Zn(2+) site. Residue E215 is part of the active site.

It belongs to the AspA/AstE family. Succinylglutamate desuccinylase subfamily. Zn(2+) is required as a cofactor.

It carries out the reaction N-succinyl-L-glutamate + H2O = L-glutamate + succinate. The protein operates within amino-acid degradation; L-arginine degradation via AST pathway; L-glutamate and succinate from L-arginine: step 5/5. Its function is as follows. Transforms N(2)-succinylglutamate into succinate and glutamate. In Pseudomonas paraeruginosa (strain DSM 24068 / PA7) (Pseudomonas aeruginosa (strain PA7)), this protein is Succinylglutamate desuccinylase.